A 315-amino-acid chain; its full sequence is Replication-associated protein VP4 (315 aa).

Catalysis depends on O-(5'-phospho-DNA)-tyrosine intermediate residues tyrosine 176 and tyrosine 180. Positions 253 to 315 (EYDAKVKLKS…FKQLQEKLKL (63 aa)) form a coiled coil.

Belongs to the microviridae Rep protein family.

The catalysed reaction is ATP + (deoxyribonucleotide)n-3'-hydroxyl + 5'-phospho-(deoxyribonucleotide)m = (deoxyribonucleotide)n+m + AMP + diphosphate.. Plays an essential role in viral DNA replication. Binds the origin of replication and cleaves the dsDNA replicative form I (RFI) and becomes covalently bound to it via phosphotyrosine bond, generating the dsDNA replicative form II (RFII). In turn, viral DNA replication initiates at the 3'-OH of the cleavage site. After one round of rolling circle synthesis, protein VP4 is linked to the newly synthesized ssDNA and joins the ends of the displaced strand to generate a circular single-stranded molecule ready to be packed into a virion. The protein is Replication-associated protein VP4 of Bdellovibrio bacteriovorus (Bacteriophage phiMH2K).